A 526-amino-acid polypeptide reads, in one-letter code: Probable carboxypeptidase 2 (526 aa).

Positions 1–21 (MVAYRLLALISLGLGSHCASA) are cleaved as a signal peptide. A glycan (N-linked (GlcNAc...) asparagine) is linked at N46. The interval 53-76 (PAFTSPGTVPRGFSDGTSGPTRDE) is disordered. The Peptidase M14 domain occupies 71-351 (GPTRDETMEG…VMAKSILQTA (281 aa)). A glycan (N-linked (GlcNAc...) asparagine) is linked at N116. Positions 136, 139, and 224 each coordinate Zn(2+). E322 serves as the catalytic Proton donor/acceptor. N-linked (GlcNAc...) asparagine glycans are attached at residues N393 and N459.

Belongs to the peptidase M14 family. It depends on Zn(2+) as a cofactor.

The protein resides in the secreted. Functionally, extracellular metalloprotease that contributes to pathogenicity. This is Probable carboxypeptidase 2 (MCPB) from Arthroderma benhamiae (strain ATCC MYA-4681 / CBS 112371) (Trichophyton mentagrophytes).